The sequence spans 492 residues: Protein adenylyltransferase Fic (492 aa).

Residues 1–17 (MCTEAEQPSPPAQQQEQ) are compositionally biased toward low complexity. The tract at residues 1–25 (MCTEAEQPSPPAQQQEQGNPPLCKA) is disordered. The helical transmembrane segment at 33–55 (LYRLVLLFVAGSLAAWTFHALSS) threads the bilayer. TPR repeat units lie at residues 118–151 (ALGA…APRH) and 152–186 (PEVL…SPSN). Residues 243–248 (SVGIEG) carry the Inhibitory (S/T)XXXE(G/N) motif motif. Residues Glu247 and 328–331 (VGGH) contribute to the ATP site. A Fido domain is found at 297 to 432 (ITIKDILELH…IRPFVRFIAD (136 aa)). The active site involves His375. ATP is bound by residues 379-386 (DGNGRTSR), 411-412 (YY), and Asn419.

Belongs to the fic family. In terms of assembly, homodimer.

The protein localises to the membrane. The catalysed reaction is L-tyrosyl-[protein] + ATP = O-(5'-adenylyl)-L-tyrosyl-[protein] + diphosphate. It catalyses the reaction L-threonyl-[protein] + ATP = 3-O-(5'-adenylyl)-L-threonyl-[protein] + diphosphate. It carries out the reaction 3-O-(5'-adenylyl)-L-threonyl-[protein] + H2O = L-threonyl-[protein] + AMP + H(+). With respect to regulation, the side chain of Glu-247 determines which of the two opposing activities (AMPylase or de-AMPylase) will take place. In response to endoplasmic reticulum stress, mediates de-AMPylase activity. Adenylyltransferase activity is inhibited by the inhibitory helix present at the N-terminus: Glu-247 binds ATP and competes with ATP-binding at Arg-386, thereby preventing adenylyltransferase activity. In unstressed cells, disengagement of Glu-247 promotes adenylyltransferase activity. Activation dissociates ATP-binding from Glu-247, allowing ordered binding of the entire ATP moiety with the alpha-phosphate in an orientation that is productive for accepting an incoming target hydroxyl side chain. In terms of biological role, protein that can both mediate the addition of adenosine 5'-monophosphate (AMP) to specific residues of target proteins (AMPylation), and the removal of the same modification from target proteins (de-AMPylation), depending on the context. The side chain of Glu-247 determines which of the two opposing activities (AMPylase or de-AMPylase) will take place. Acts as a key regulator of the unfolded protein response (UPR) by mediating AMPylation or de-AMPylation of Hsc70-3/BiP. In unstressed cells, acts as an adenylyltransferase by mediating AMPylation of Hsc70-3/BiP at 'Thr-518', thereby inactivating it. In response to endoplasmic reticulum stress, acts as a phosphodiesterase by mediating removal of ATP (de-AMPylation) from Hsc70-3/BiP at 'Thr-518', leading to restore HSPA5/BiP activity. The protein is Protein adenylyltransferase Fic of Drosophila sechellia (Fruit fly).